A 522-amino-acid polypeptide reads, in one-letter code: Subtilisin-like protease 10 (522 aa).

The signal sequence occupies residues 1–19 (MFFFKGVVAVLSFFSAVNA). Residues 20 to 117 (APFMKPNNGT…VERDQIGTSQ (98 aa)) constitute a propeptide that is removed on maturation. The region spanning 36–113 (SYIVLLKRDI…HVAHVERDQI (78 aa)) is the Inhibitor I9 domain. The region spanning 127 to 405 (NWGLGRLSNS…KLLVNGANGT (279 aa)) is the Peptidase S8 domain. Catalysis depends on charge relay system residues aspartate 159 and histidine 190. Asparagine 251 carries N-linked (GlcNAc...) asparagine glycosylation. Serine 348 serves as the catalytic Charge relay system. Polar residues predominate over residues 383 to 397 (SASVKNPGPNTTNKL). The disordered stretch occupies residues 383–515 (SASVKNPGPN…GWNRPMWWNR (133 aa)). Residues asparagine 392 and asparagine 403 are each glycosylated (N-linked (GlcNAc...) asparagine). The segment covering 432–459 (SQNPPPGQNPPPGQNPPPEQPAPSPPAN) has biased composition (pro residues).

It belongs to the peptidase S8 family.

The protein localises to the secreted. Functionally, secreted subtilisin-like serine protease with keratinolytic activity that contributes to pathogenicity. This Trichophyton verrucosum (strain HKI 0517) protein is Subtilisin-like protease 10 (SUB10).